The chain runs to 115 residues: Protein TrbA (115 aa).

The next 4 helical transmembrane spans lie at 5 to 25, 39 to 59, 60 to 80, and 91 to 111; these read YLKM…GYFF, LVFL…LWFL, CGAI…AALP, and IFIC…FIRG.

It localises to the cell membrane. This is Protein TrbA (trbA) from Escherichia coli (strain K12).